The chain runs to 372 residues: Spermidine/putrescine import ATP-binding protein PotA (372 aa).

An ABC transporter domain is found at 13-243; sequence IKLTGISKSF…PKNLFVARFI (231 aa). 45-52 is a binding site for ATP; that stretch reads GPSGCGKT.

This sequence belongs to the ABC transporter superfamily. Spermidine/putrescine importer (TC 3.A.1.11.1) family. The complex is composed of two ATP-binding proteins (PotA), two transmembrane proteins (PotB and PotC) and a solute-binding protein (PotD).

The protein resides in the cell inner membrane. The catalysed reaction is ATP + H2O + polyamine-[polyamine-binding protein]Side 1 = ADP + phosphate + polyamineSide 2 + [polyamine-binding protein]Side 1.. Part of the ABC transporter complex PotABCD involved in spermidine/putrescine import. Responsible for energy coupling to the transport system. This is Spermidine/putrescine import ATP-binding protein PotA from Aliivibrio fischeri (strain ATCC 700601 / ES114) (Vibrio fischeri).